Consider the following 100-residue polypeptide: Urease subunit gamma (100 aa).

It belongs to the urease gamma subunit family. In terms of assembly, heterotrimer of UreA (gamma), UreB (beta) and UreC (alpha) subunits. Three heterotrimers associate to form the active enzyme.

The protein localises to the cytoplasm. It catalyses the reaction urea + 2 H2O + H(+) = hydrogencarbonate + 2 NH4(+). The protein operates within nitrogen metabolism; urea degradation; CO(2) and NH(3) from urea (urease route): step 1/1. This is Urease subunit gamma from Cupriavidus taiwanensis (strain DSM 17343 / BCRC 17206 / CCUG 44338 / CIP 107171 / LMG 19424 / R1) (Ralstonia taiwanensis (strain LMG 19424)).